Here is a 132-residue protein sequence, read N- to C-terminus: MIFGIGTDICDIRRLRATYARRGERFAEKVLGPQELEVFRYRLAKVEARGLSYLATRFSAKEAFSKAIGTGMRTPMSWRACQILNARSGKPEIRLHGPLAAWFEAQGLRAHVSVTDETDYAASFVVVETQET.

Residues aspartate 8 and glutamate 62 each coordinate Mg(2+).

It belongs to the P-Pant transferase superfamily. AcpS family. The cofactor is Mg(2+).

The protein localises to the cytoplasm. It carries out the reaction apo-[ACP] + CoA = holo-[ACP] + adenosine 3',5'-bisphosphate + H(+). Its function is as follows. Transfers the 4'-phosphopantetheine moiety from coenzyme A to a Ser of acyl-carrier-protein. The protein is Holo-[acyl-carrier-protein] synthase of Methylibium petroleiphilum (strain ATCC BAA-1232 / LMG 22953 / PM1).